A 310-amino-acid chain; its full sequence is Elongation factor Ts (310 aa).

The tract at residues 80 to 83 (TDFV) is involved in Mg(2+) ion dislocation from EF-Tu.

This sequence belongs to the EF-Ts family.

The protein localises to the cytoplasm. Associates with the EF-Tu.GDP complex and induces the exchange of GDP to GTP. It remains bound to the aminoacyl-tRNA.EF-Tu.GTP complex up to the GTP hydrolysis stage on the ribosome. The polypeptide is Elongation factor Ts (Methylocella silvestris (strain DSM 15510 / CIP 108128 / LMG 27833 / NCIMB 13906 / BL2)).